The chain runs to 262 residues: Phosphatidylserine decarboxylase proenzyme (262 aa).

Active-site charge relay system; for autoendoproteolytic cleavage activity residues include Asp-86, His-142, and Ser-226. The active-site Schiff-base intermediate with substrate; via pyruvic acid; for decarboxylase activity is the Ser-226. The residue at position 226 (Ser-226) is a Pyruvic acid (Ser); by autocatalysis.

It belongs to the phosphatidylserine decarboxylase family. PSD-B subfamily. Prokaryotic type I sub-subfamily. As to quaternary structure, heterodimer of a large membrane-associated beta subunit and a small pyruvoyl-containing alpha subunit. The cofactor is pyruvate. Is synthesized initially as an inactive proenzyme. Formation of the active enzyme involves a self-maturation process in which the active site pyruvoyl group is generated from an internal serine residue via an autocatalytic post-translational modification. Two non-identical subunits are generated from the proenzyme in this reaction, and the pyruvate is formed at the N-terminus of the alpha chain, which is derived from the carboxyl end of the proenzyme. The autoendoproteolytic cleavage occurs by a canonical serine protease mechanism, in which the side chain hydroxyl group of the serine supplies its oxygen atom to form the C-terminus of the beta chain, while the remainder of the serine residue undergoes an oxidative deamination to produce ammonia and the pyruvoyl prosthetic group on the alpha chain. During this reaction, the Ser that is part of the protease active site of the proenzyme becomes the pyruvoyl prosthetic group, which constitutes an essential element of the active site of the mature decarboxylase.

It is found in the cell membrane. The enzyme catalyses a 1,2-diacyl-sn-glycero-3-phospho-L-serine + H(+) = a 1,2-diacyl-sn-glycero-3-phosphoethanolamine + CO2. Its pathway is phospholipid metabolism; phosphatidylethanolamine biosynthesis; phosphatidylethanolamine from CDP-diacylglycerol: step 2/2. Functionally, catalyzes the formation of phosphatidylethanolamine (PtdEtn) from phosphatidylserine (PtdSer). This Bacillus cereus (strain AH820) protein is Phosphatidylserine decarboxylase proenzyme.